The chain runs to 95 residues: Acyl carrier protein AcpXL (95 aa).

The 87-residue stretch at 4–90 (TATFDKVADI…NLCAKIDELR (87 aa)) folds into the Carrier domain. At Ser-39 the chain carries O-(pantetheine 4'-phosphoryl)serine.

In terms of processing, 4'-phosphopantetheine is transferred from CoA to a specific serine of apo-ACP by AcpS. This modification is essential for activity because fatty acids are bound in thioester linkage to the sulfhydryl of the prosthetic group.

The protein localises to the cytoplasm. It functions in the pathway glycolipid biosynthesis; KDO(2)-lipid A biosynthesis. Its function is as follows. Carrier of the growing fatty acid chain in fatty acid biosynthesis. Is involved in the transfer of long hydroxylated fatty acids to lipid A. The chain is Acyl carrier protein AcpXL (acpXL) from Rhizobium meliloti (strain 1021) (Ensifer meliloti).